The primary structure comprises 390 residues: Zinc transporter 7 (390 aa).

Residues 1–37 lie on the Cytoplasmic side of the membrane; that stretch reads MLPLSIKDDEYKPPKFNLVRKVSGWIRSIFSDTTSRN. The helical transmembrane segment at 38-58 threads the bilayer; that stretch reads LFCFLCLNLSFAFVELFYGIW. The Lumenal portion of the chain corresponds to 59–67; sequence SNSLGLISD. The chain crosses the membrane as a helical span at residues 68 to 88; that stretch reads SFHMFFDCTALLAGLAASVIS. Residues 89 to 102 lie on the Cytoplasmic side of the membrane; the sequence is RWKTNEAFSYGYVR. The chain crosses the membrane as a helical span at residues 103–123; it reads AEVLAGFVNGLFLIFTAFFIF. The Lumenal portion of the chain corresponds to 124 to 140; sequence SEGIERALDTPEVHHER. A helical transmembrane segment spans residues 141–161; sequence LLPVSILGFLVNLIGIFVFQH. Residues 161 to 226 are his-rich loop; it reads HGGGHGHSHE…SHDQSHKHGH (66 aa). At 162–250 the chain is on the cytoplasmic side; sequence GGGHGHSHES…TGSSKQILEG (89 aa). Residues 167–243 are disordered; the sequence is HSHESGHGHS…DEPPEEHTGS (77 aa). Positions 177–186 are enriched in low complexity; the sequence is HSLFNGSLSH. The span at 187-208 shows a compositional bias: basic residues; sequence GHSHSHGGSHGHSHGGGHGHSH. Composition is skewed to basic and acidic residues over residues 209-222 and 232-242; these read SHGE…DQSH and CHDEPPEEHTG. Residues 251–271 traverse the membrane as a helical segment; sequence VFLHIVADALGSVGVIISTIL. Topologically, residues 272-276 are lumenal; sequence MQRYG. A helical transmembrane segment spans residues 277-297; the sequence is LMIADPICSMLIALLIFVSVI. The Cytoplasmic segment spans residues 298-390; the sequence is PLLKQSIGIL…LYVQIDMAAM (93 aa).

It belongs to the cation diffusion facilitator (CDF) transporter (TC 2.A.4) family. SLC30A subfamily. Homooligomer.

The protein localises to the golgi apparatus membrane. It is found in the cytoplasmic vesicle. Its subcellular location is the golgi apparatus. It localises to the trans-Golgi network. The protein resides in the sarcoplasmic reticulum. The protein localises to the mitochondrion. The enzyme catalyses Zn(2+)(in) = Zn(2+)(out). Functionally, zinc ion transporter mediating zinc entry from the cytosol into the lumen of organelles along the secretory pathway. By contributing to zinc ion homeostasis within the early secretory pathway, regulates the activation and folding of enzymes like alkaline phosphatases. This Xenopus tropicalis (Western clawed frog) protein is Zinc transporter 7 (slc30a7).